The following is a 499-amino-acid chain: Beta-amylase (499 aa).

Residues aspartate 55, histidine 95, and aspartate 103 each contribute to the substrate site. Residue glutamate 188 is the Proton donor of the active site. Residues lysine 298, histidine 303, and threonine 345 each contribute to the substrate site. Catalysis depends on glutamate 383, which acts as the Proton acceptor. Substrate-binding positions include 384–385 (NA) and arginine 423.

This sequence belongs to the glycosyl hydrolase 14 family. In terms of assembly, homotetramer.

It carries out the reaction Hydrolysis of (1-&gt;4)-alpha-D-glucosidic linkages in polysaccharides so as to remove successive maltose units from the non-reducing ends of the chains.. The chain is Beta-amylase (BMY1) from Ipomoea batatas (Sweet potato).